A 310-amino-acid polypeptide reads, in one-letter code: MNSSSLLTPSSSPSPHLQSPATFDHDDFLHHIFSSTPWPSSVLDDTPPPTSDCAPVTGFHHHDADSRNQITMIPLSHNHPNDALFNGFSTGSLPFHLPQGSGGQTQTQSQATASATTGGATAQPQTKPKVRARRGQATDPHSIAERLRRERIAERMKSLQELVPNGNKTDKASMLDEIIDYVKFLQLQVKVLSMSRLGGAASASSQISEDAGGSHENTSSSGEAKMTEHQVAKLMEEDMGSAMQYLQGKGLCLMPISLATTISTATCPSRSPFVKDTGVPLSPNLSTTIVANGNGSSLVTVKDAPSVSKP.

2 stretches are compositionally biased toward low complexity: residues Met1–Pro20 and Gln104–Thr126. 2 disordered regions span residues Met1–Phe23 and Phe95–Ile143. Positions Gln136–Arg149 are basic motif; degenerate. The bHLH domain maps to Gln136–Leu185. Residues Glu150–Leu185 are helix-loop-helix motif. The tract at residues Ala203–Lys225 is disordered.

In terms of assembly, homodimer. Expressed constitutively in roots, leaves, stems, and flowers.

It is found in the nucleus. Functionally, transcription factor that regulates the development of root hairs. Transcription factor that regulates the development of sperm cells. The sequence is that of Transcription factor LRL2 from Arabidopsis thaliana (Mouse-ear cress).